The primary structure comprises 294 residues: ATP synthase gamma chain (294 aa).

It belongs to the ATPase gamma chain family. F-type ATPases have 2 components, CF(1) - the catalytic core - and CF(0) - the membrane proton channel. CF(1) has five subunits: alpha(3), beta(3), gamma(1), delta(1), epsilon(1). CF(0) has three main subunits: a, b and c.

Its subcellular location is the cell inner membrane. In terms of biological role, produces ATP from ADP in the presence of a proton gradient across the membrane. The gamma chain is believed to be important in regulating ATPase activity and the flow of protons through the CF(0) complex. This is ATP synthase gamma chain from Campylobacter lari (strain RM2100 / D67 / ATCC BAA-1060).